Here is a 463-residue protein sequence, read N- to C-terminus: Chromosomal replication initiator protein DnaA (463 aa).

Residues 1–83 form a domain I, interacts with DnaA modulators region; sequence MNTNQIILTD…LQLFQHYNNT (83 aa). A domain II region spans residues 83–124; that stretch reads TIKSIDIITKELPGTTQTVIELPTKTFADIGSSELNSENIFS. A domain III, AAA+ region region spans residues 125-343; it reads TLDVRFTFDN…GALNKVIAHS (219 aa). Gly171, Gly173, Lys174, and Thr175 together coordinate ATP. Residues 344 to 463 form a domain IV, binds dsDNA region; the sequence is NFTLKEITLE…INLLMKILQH (120 aa).

Belongs to the DnaA family. In terms of assembly, oligomerizes as a right-handed, spiral filament on DNA at oriC.

The protein resides in the cytoplasm. In terms of biological role, plays an essential role in the initiation and regulation of chromosomal replication. ATP-DnaA binds to the origin of replication (oriC) to initiate formation of the DNA replication initiation complex once per cell cycle. Binds the DnaA box (a 9 base pair repeat at the origin) and separates the double-stranded (ds)DNA. Forms a right-handed helical filament on oriC DNA; dsDNA binds to the exterior of the filament while single-stranded (ss)DNA is stabiized in the filament's interior. The ATP-DnaA-oriC complex binds and stabilizes one strand of the AT-rich DNA unwinding element (DUE), permitting loading of DNA polymerase. After initiation quickly degrades to an ADP-DnaA complex that is not apt for DNA replication. Binds acidic phospholipids. The polypeptide is Chromosomal replication initiator protein DnaA (Rickettsia akari (strain Hartford)).